We begin with the raw amino-acid sequence, 410 residues long: SPbeta prophage-derived uncharacterized protein YonV (410 aa).

The protein is SPbeta prophage-derived uncharacterized protein YonV (yonV) of Bacillus subtilis (strain 168).